The sequence spans 188 residues: CXXC-type zinc finger protein 4 (188 aa).

The interval 1-20 is disordered; it reads MHRNDSQRLGKPGGAPESLQ. The CXXC-type zinc-finger motif lies at 122 to 163; that stretch reads AKKKRKRCGVCVPCKRLINCGVCSSCRNRKTGHQICKFRKCE. Zn(2+) contacts are provided by Cys-129, Cys-132, Cys-135, Cys-141, Cys-144, Cys-147, Cys-157, and Cys-162.

The protein localises to the cytoplasm. Its function is as follows. Acts as a negative regulator of the Wnt signaling pathway required for anterior neural structure formation. Binds preferentially to DNA containing cytidine-phosphate-guanosine (CpG) dinucleotides over CpH (H=A, T, and C), hemimethylated-CpG and hemimethylated-hydroxymethyl-CpG. The chain is CXXC-type zinc finger protein 4 (cxxc4) from Xenopus tropicalis (Western clawed frog).